We begin with the raw amino-acid sequence, 650 residues long: Phosphatidylinositol 4-kinase gamma 7 (650 aa).

A Ubiquitin-like; degenerate domain is found at 46–103; it reads RRVFVQTETGCVLGMELDRSDNVHTVKRRLQIALNFPTEESSLTYGDMVLTNDLSAVR. Residues 166 to 463 enclose the PI3K/PI4K catalytic domain; that stretch reads GVEPLPVHSG…SVTERDVFSP (298 aa). The segment at 172–178 is G-loop; sequence VHSGLGG. Residues 173 to 179, Lys-194, and 283 to 286 each bind ATP; these read HSGLGGA and QKFV. A catalytic loop region spans residues 316-324; sequence FNTDRHGGN. The activation loop stretch occupies residues 343–369; the sequence is PIDHGLCLPETLEDPYFEWIHWPQASL. Asp-345 is a binding site for ATP. Disordered regions lie at residues 508 to 534 and 560 to 595; these read SLGKLEESIKEEEEDEEEEEDKTENTV and STSMKNTHLSDTTRKNPKPLTRGKSENTSSGHKSAN. Acidic residues predominate over residues 516-529; it reads IKEEEEDEEEEEDK. 2 stretches are compositionally biased toward polar residues: residues 560–569 and 585–595; these read STSMKNTHLS and ENTSSGHKSAN. Residue Ser-593 is modified to Phosphoserine.

Belongs to the PI3/PI4-kinase family. Type II PI4K subfamily.

It catalyses the reaction a 1,2-diacyl-sn-glycero-3-phospho-(1D-myo-inositol) + ATP = a 1,2-diacyl-sn-glycero-3-phospho-(1D-myo-inositol 4-phosphate) + ADP + H(+). Functionally, the phosphorylation of phosphatidylinositol (PI) to PI4P is the first committed step in the generation of phosphatidylinositol 4,5-bisphosphate (PIP2), a precursor of the second messenger inositol 1,4,5-trisphosphate (InsP3). Undergoes autophosphorylation and phosphorylates serine/threonine residues of protein substrates. This Arabidopsis thaliana (Mouse-ear cress) protein is Phosphatidylinositol 4-kinase gamma 7.